Here is a 111-residue protein sequence, read N- to C-terminus: WAP four-disulfide core domain protein 12 (111 aa).

A signal peptide spans 1–23 (MGSSSFLVLMVSLVLVTLVAVEG). Residues 27–74 (GIEKAGVCPADNVRCFKSDPPQCHTDQDCLGERKCCYLHCGFKCVIPV) form the WAP domain. Intrachain disulfides connect cysteine 34-cysteine 62, cysteine 41-cysteine 66, cysteine 49-cysteine 61, and cysteine 55-cysteine 70. Residues 80 to 111 (GGNKDEDVSRPYPEPGWEAKCPGSSSTRCPQK) form a disordered region. Positions 102-111 (GSSSTRCPQK) are enriched in polar residues.

As to expression, highly expressed in prostate, skin, lung and esophagus. Weakly expressed in skeletal muscle, epididymis, kidney, trachea, salivary gland, testis and seminal vesicle.

It localises to the secreted. Its function is as follows. Antibacterial protein. Putative acid-stable proteinase inhibitor. The sequence is that of WAP four-disulfide core domain protein 12 (WFDC12) from Homo sapiens (Human).